The primary structure comprises 247 residues: 3-deoxy-manno-octulosonate cytidylyltransferase (247 aa).

The protein belongs to the KdsB family.

Its subcellular location is the cytoplasm. It catalyses the reaction 3-deoxy-alpha-D-manno-oct-2-ulosonate + CTP = CMP-3-deoxy-beta-D-manno-octulosonate + diphosphate. It functions in the pathway nucleotide-sugar biosynthesis; CMP-3-deoxy-D-manno-octulosonate biosynthesis; CMP-3-deoxy-D-manno-octulosonate from 3-deoxy-D-manno-octulosonate and CTP: step 1/1. It participates in bacterial outer membrane biogenesis; lipopolysaccharide biosynthesis. Functionally, activates KDO (a required 8-carbon sugar) for incorporation into bacterial lipopolysaccharide in Gram-negative bacteria. This Methylobacterium sp. (strain 4-46) protein is 3-deoxy-manno-octulosonate cytidylyltransferase.